A 235-amino-acid chain; its full sequence is uncharacterized protein (235 aa).

This is an uncharacterized protein from Bacillus subtilis (strain 168).